The primary structure comprises 232 residues: Small ribosomal subunit protein uS3 (232 aa).

In terms of domain architecture, KH type-2 spans 39-107; it reads IRAFLKKKLY…EVNVNIKEER (69 aa). The disordered stretch occupies residues 212–232; it reads VQPEKTEDDAPKKTRRPRRGK. Residues 213 to 223 are compositionally biased toward basic and acidic residues; it reads QPEKTEDDAPK.

Belongs to the universal ribosomal protein uS3 family. Part of the 30S ribosomal subunit. Forms a tight complex with proteins S10 and S14.

In terms of biological role, binds the lower part of the 30S subunit head. Binds mRNA in the 70S ribosome, positioning it for translation. This Campylobacter curvus (strain 525.92) protein is Small ribosomal subunit protein uS3.